The sequence spans 1615 residues: DNA-directed RNA polymerase I subunit rpa1 (1615 aa).

Positions 65, 68, 75, and 78 each coordinate Zn(2+). The tract at residues 155-181 (GKSNEEGEEVMESDESDSDKMDTDENK) is disordered. Positions 160 to 171 (EGEEVMESDESD) are enriched in acidic residues. Over residues 172-181 (SDKMDTDENK) the composition is skewed to basic and acidic residues. Mg(2+) is bound by residues Asp-593, Asp-595, and Asp-597. The bridging helix stretch occupies residues 955 to 967 (PQDYFFHCMAGRE). Acidic residues predominate over residues 1305-1316 (DSLTINDDDAPA). The segment at 1305 to 1411 (DSLTINDDDA…NSRSSNSFSD (107 aa)) is disordered. A compositionally biased stretch (low complexity) spans 1317–1336 (NDDTTNNDENTSQQQPSSQN). The segment covering 1366-1399 (EDGEEEAEEKDSDEGESEAEESDDKSDVDSDSDE) has biased composition (acidic residues). A compositionally biased stretch (low complexity) spans 1400–1411 (ISNSRSSNSFSD).

It belongs to the RNA polymerase beta' chain family. As to quaternary structure, component of the RNA polymerase I (Pol I) complex consisting of at least 13 subunits.

The protein localises to the nucleus. It catalyses the reaction RNA(n) + a ribonucleoside 5'-triphosphate = RNA(n+1) + diphosphate. Its function is as follows. DNA-dependent RNA polymerase catalyzes the transcription of DNA into RNA using the four ribonucleoside triphosphates as substrates. Largest and catalytic core component of RNA polymerase I which synthesizes ribosomal RNA precursors. Forms the polymerase active center together with the second largest subunit. A single stranded DNA template strand of the promoter is positioned within the central active site cleft of Pol I. A bridging helix emanates from RPA1 and crosses the cleft near the catalytic site and is thought to promote translocation of Pol I by acting as a ratchet that moves the RNA-DNA hybrid through the active site by switching from straight to bent conformations at each step of nucleotide addition. The protein is DNA-directed RNA polymerase I subunit rpa1 (polr1a) of Dictyostelium discoideum (Social amoeba).